The primary structure comprises 510 residues: 2,3-bisphosphoglycerate-independent phosphoglycerate mutase (510 aa).

Residues aspartate 12 and serine 62 each contribute to the Mn(2+) site. The Phosphoserine intermediate role is filled by serine 62. Residues histidine 121, 151-152 (RD), arginine 183, arginine 189, 258-261 (RPDR), and lysine 331 contribute to the substrate site. Mn(2+)-binding residues include aspartate 398, histidine 402, aspartate 439, histidine 440, and histidine 458.

Belongs to the BPG-independent phosphoglycerate mutase family. In terms of assembly, monomer. Mn(2+) serves as cofactor.

It catalyses the reaction (2R)-2-phosphoglycerate = (2R)-3-phosphoglycerate. Its pathway is carbohydrate degradation; glycolysis; pyruvate from D-glyceraldehyde 3-phosphate: step 3/5. Its function is as follows. Catalyzes the interconversion of 2-phosphoglycerate and 3-phosphoglycerate. This chain is 2,3-bisphosphoglycerate-independent phosphoglycerate mutase, found in Clostridioides difficile (strain 630) (Peptoclostridium difficile).